Here is a 320-residue protein sequence, read N- to C-terminus: Undecaprenyl-diphosphatase (320 aa).

Helical transmembrane passes span 9-29, 82-102, 130-150, 161-181, 191-211, 236-256, 265-285, and 296-316; these read FVLVSAVSAALSVVLFPLEVF, GVAFTAIIQLGSIAAVLWYFW, LGIILGTIPIVFFGLLIKKLI, LGAIAVASIVMSLLLGVGEKL, LTMQDGLLMGLAQALALIPGV, FLLGIPAITLAGLVELKDVFA, LPLIVGVISAAIFSYMAIAGL, and VFIWYRLVFGIAILGAISAGI.

The protein belongs to the UppP family.

It localises to the cell inner membrane. The enzyme catalyses di-trans,octa-cis-undecaprenyl diphosphate + H2O = di-trans,octa-cis-undecaprenyl phosphate + phosphate + H(+). In terms of biological role, catalyzes the dephosphorylation of undecaprenyl diphosphate (UPP). Confers resistance to bacitracin. This Trichormus variabilis (strain ATCC 29413 / PCC 7937) (Anabaena variabilis) protein is Undecaprenyl-diphosphatase.